A 249-amino-acid chain; its full sequence is Segregation and condensation protein A (249 aa).

The protein belongs to the ScpA family. Component of a cohesin-like complex composed of ScpA, ScpB and the Smc homodimer, in which ScpA and ScpB bind to the head domain of Smc. The presence of the three proteins is required for the association of the complex with DNA.

The protein localises to the cytoplasm. Participates in chromosomal partition during cell division. May act via the formation of a condensin-like complex containing Smc and ScpB that pull DNA away from mid-cell into both cell halves. The chain is Segregation and condensation protein A from Oceanobacillus iheyensis (strain DSM 14371 / CIP 107618 / JCM 11309 / KCTC 3954 / HTE831).